The primary structure comprises 431 residues: MGGSDENRHGVIGPMNRQQGGLRGGKVIPTNGQTRRALSNINKNIIGAPVYPCAVKRPFTEKNGICNKKIPPVPVHRPVTRKFAAQLAENNLQIHKEETKKPDLISNEALDRIITDVEEGDFNEPMFVQHTEAMLEEIDKMEGIEMQDSNDIDAEVEESVMDIDSCDKNNPLSVVEYINDIYCFYKKNECRSCVPPNYMENQHDINERMRGILFDWLIEVHYKFELMEETLYLTINLIDRFLAVHQHIARKKLQLVGVTAMLLACKYEEVSVPVVDDLILISDKAYTRTEILDMEKLMANTLQFNFCLPTPYVFMRRFLKAAQSDKKLELLSFFMIELCLVEYEMLQYTPSQLAASAIYTAQSTLKGYEDWSKTSEFHSGYTEEALLECSRKMVGLHHKAGTGKLTGVHRKYNTSKFGYAARIEPAGFLLL.

Positions 1 to 30 are disordered; sequence MGGSDENRHGVIGPMNRQQGGLRGGKVIPT.

Belongs to the cyclin family. Cyclin AB subfamily. As to quaternary structure, interacts with SMR11.

The chain is Cyclin-B2-4 (CYCB2-4) from Arabidopsis thaliana (Mouse-ear cress).